Reading from the N-terminus, the 486-residue chain is Vanillin dehydrogenase (486 aa).

Residues 210 to 211 (GP), 230 to 231 (GS), and 252 to 254 (ELG) each bind NAD(+). The active-site Proton acceptor is E252. The Nucleophile role is filled by C286. 380 to 382 (EVF) contacts NAD(+).

This sequence belongs to the aldehyde dehydrogenase family.

The catalysed reaction is vanillin + NAD(+) + H2O = vanillate + NADH + 2 H(+). Its function is as follows. Catalyzes NAD(+)-dependent oxidation of vanillin to vanillate. Also oxidizes other aromatic aldehydes including benzaldehyde, coniferyl aldehyde and cinnamaldehyde, but has a preference for vanillin. Not active with NADP(+). Involved in the degradation pathway of lignin-derived aromatic compounds of plant cell walls. Catalyzes the conversion of vanillin to vanillate due to toxicity of vanillin to the cells. The protein is Vanillin dehydrogenase of Amycolatopsis sp. (strain ATCC 39116 / 75iv2).